We begin with the raw amino-acid sequence, 101 residues long: Large ribosomal subunit protein P1 (101 aa).

Low complexity predominate over residues 61–72 (AAPAAAAAPAAA). Residues 61-101 (AAPAAAAAPAAAEEAEEEAEEEEEEEEAEEEAAAGLGALFG) form a disordered region. Residues 73-92 (EEAEEEAEEEEEEEEAEEEA) are compositionally biased toward acidic residues.

The protein belongs to the eukaryotic ribosomal protein P1/P2 family. In terms of assembly, part of the 50S ribosomal subunit. Homodimer, it forms part of the ribosomal stalk which helps the ribosome interact with GTP-bound translation factors. Forms a heptameric uL10/P0(P1)2(P1)2(P1)2 complex, where uL10/P0 forms an elongated spine to which the P1 dimers bind in a sequential fashion.

Functionally, forms part of the ribosomal stalk, playing a central role in the interaction of the ribosome with GTP-bound translation factors. This chain is Large ribosomal subunit protein P1, found in Methanothermobacter thermautotrophicus (strain ATCC 29096 / DSM 1053 / JCM 10044 / NBRC 100330 / Delta H) (Methanobacterium thermoautotrophicum).